The following is a 209-amino-acid chain: Mei4-dependent protein 1 (209 aa).

The N-terminal stretch at 1 to 22 is a signal peptide; it reads MLHATQLCYLLLFCFLPISISS.

It localises to the secreted. The sequence is that of Mei4-dependent protein 1 (mde1) from Schizosaccharomyces pombe (strain 972 / ATCC 24843) (Fission yeast).